The chain runs to 598 residues: Aspartate--tRNA(Asp/Asn) ligase (598 aa).

L-aspartate is bound at residue Glu-173. The aspartate stretch occupies residues Gln-197–Lys-200. Arg-219 is a binding site for L-aspartate. Residues Arg-219–Glu-221 and Gln-228 contribute to the ATP site. Residue His-448 coordinates L-aspartate. Glu-482 contributes to the ATP binding site. Arg-489 is a binding site for L-aspartate. Gly-534 to Arg-537 is an ATP binding site. The disordered stretch occupies residues Gly-560 to Ala-598. Basic and acidic residues predominate over residues Gln-575 to Ala-591.

The protein belongs to the class-II aminoacyl-tRNA synthetase family. Type 1 subfamily. In terms of assembly, homodimer.

It localises to the cytoplasm. The enzyme catalyses tRNA(Asx) + L-aspartate + ATP = L-aspartyl-tRNA(Asx) + AMP + diphosphate. Its function is as follows. Aspartyl-tRNA synthetase with relaxed tRNA specificity since it is able to aspartylate not only its cognate tRNA(Asp) but also tRNA(Asn). Reaction proceeds in two steps: L-aspartate is first activated by ATP to form Asp-AMP and then transferred to the acceptor end of tRNA(Asp/Asn). The chain is Aspartate--tRNA(Asp/Asn) ligase from Kineococcus radiotolerans (strain ATCC BAA-149 / DSM 14245 / SRS30216).